Reading from the N-terminus, the 494-residue chain is Protein nucleotidyltransferase YdiU (494 aa).

Residues Gly-90, Gly-92, Arg-93, Lys-113, Asp-125, Gly-126, Arg-176, and Arg-183 each coordinate ATP. Asp-252 (proton acceptor) is an active-site residue. Mg(2+) is bound by residues Asn-253 and Asp-262. Asp-262 serves as a coordination point for ATP.

It belongs to the SELO family. Mg(2+) is required as a cofactor. Requires Mn(2+) as cofactor.

It carries out the reaction L-seryl-[protein] + ATP = 3-O-(5'-adenylyl)-L-seryl-[protein] + diphosphate. It catalyses the reaction L-threonyl-[protein] + ATP = 3-O-(5'-adenylyl)-L-threonyl-[protein] + diphosphate. The catalysed reaction is L-tyrosyl-[protein] + ATP = O-(5'-adenylyl)-L-tyrosyl-[protein] + diphosphate. The enzyme catalyses L-histidyl-[protein] + UTP = N(tele)-(5'-uridylyl)-L-histidyl-[protein] + diphosphate. It carries out the reaction L-seryl-[protein] + UTP = O-(5'-uridylyl)-L-seryl-[protein] + diphosphate. It catalyses the reaction L-tyrosyl-[protein] + UTP = O-(5'-uridylyl)-L-tyrosyl-[protein] + diphosphate. Nucleotidyltransferase involved in the post-translational modification of proteins. It can catalyze the addition of adenosine monophosphate (AMP) or uridine monophosphate (UMP) to a protein, resulting in modifications known as AMPylation and UMPylation. The sequence is that of Protein nucleotidyltransferase YdiU from Alkalilimnicola ehrlichii (strain ATCC BAA-1101 / DSM 17681 / MLHE-1).